Here is a 208-residue protein sequence, read N- to C-terminus: Cysteine-rich protein 2 (208 aa).

One can recognise an LIM zinc-binding 1 domain in the interval 5 to 57 (CPKCDKTVYFAEKVSSLGKDWHKFCLKCERCNKTLTPGGHAEHDGKPFCHKPC). Lys-23 is modified (N6-acetyllysine). Ser-104 is subject to Phosphoserine. The LIM zinc-binding 2 domain occupies 126-178 (CPRCNKRVYFAEKVTSLGKDWHRPCLRCERCSKTLTPGGHAEHDGQPYCHKPC). N6-acetyllysine is present on residues Lys-138 and Lys-144.

In terms of assembly, interacts with TGFB1I1. As to expression, expressed more abundantly in liver and kidney of females than that of males. Equally expressed in brain, lung and heart.

This Rattus norvegicus (Rat) protein is Cysteine-rich protein 2 (Crip2).